Reading from the N-terminus, the 450-residue chain is Saccharopine dehydrogenase [NADP(+), L-glutamate-forming] (450 aa).

Residues 9 to 12 (SGFV), 32 to 34 (CRT), 54 to 55 (DV), Ile-75, 97 to 98 (TS), 124 to 126 (VDP), and Ser-174 contribute to the NADP(+) site. Residues 98-99 (SY) and Asp-125 contribute to the L-saccharopine site. L-saccharopine-binding positions include Arg-223 and 244 to 246 (TLR).

Belongs to the saccharopine dehydrogenase family. As to quaternary structure, homodimer.

The protein resides in the cytoplasm. The catalysed reaction is L-saccharopine + NADP(+) + H2O = (S)-2-amino-6-oxohexanoate + L-glutamate + NADPH + H(+). Its pathway is amino-acid biosynthesis; L-lysine biosynthesis via AAA pathway; L-lysine from L-alpha-aminoadipate (fungal route): step 2/3. This Schizosaccharomyces pombe (strain 972 / ATCC 24843) (Fission yeast) protein is Saccharopine dehydrogenase [NADP(+), L-glutamate-forming].